The chain runs to 235 residues: Carboxy-S-adenosyl-L-methionine synthase (235 aa).

S-adenosyl-L-methionine contacts are provided by residues tyrosine 35, glycine 60–serine 62, aspartate 83–asparagine 84, asparagine 124, and arginine 191.

It belongs to the class I-like SAM-binding methyltransferase superfamily. Cx-SAM synthase family. As to quaternary structure, homodimer.

It catalyses the reaction prephenate + S-adenosyl-L-methionine = carboxy-S-adenosyl-L-methionine + 3-phenylpyruvate + H2O. In terms of biological role, catalyzes the conversion of S-adenosyl-L-methionine (SAM) to carboxy-S-adenosyl-L-methionine (Cx-SAM). This chain is Carboxy-S-adenosyl-L-methionine synthase, found in Campylobacter jejuni subsp. jejuni serotype O:6 (strain 81116 / NCTC 11828).